The chain runs to 249 residues: Low affinity immunoglobulin gamma Fc region receptor III-A (249 aa).

Residues 1-20 (MWQLLLPTALVLTAFSGIQA) form the signal peptide. Residues 21-203 (GLQKAVVNLD…SPSMFPPWHQ (183 aa)) lie on the Extracellular side of the membrane. 2 consecutive Ig-like C2-type domains span residues 22-102 (LQKA…VQLE) and 119-188 (EGDP…FRIS). 2 disulfide bridges follow: Cys46/Cys88 and Cys127/Cys171. Asn62, Asn164, and Asn179 each carry an N-linked (GlcNAc...) asparagine glycan. The chain crosses the membrane as a helical span at residues 204–224 (ITFCLLIGLLFAIDTVLYFSV). Over 225–249 (RRGLQSPVADYEEPKIQWSKEPQDK) the chain is Cytoplasmic. Tyr235 is modified (phosphotyrosine).

In terms of assembly, forms a heterooligomeric complex with ITAM-containing signaling subunits FCER1G. Interacts (via transmembrane domain) with signaling subunits; this interaction is a prerequisite for receptor complex expression on the cell surface and intracellular signal transduction. Binds the Fc region of antigen-complexed IgG. N-glycosylated. Post-translationally, phosphorylated following receptor ligation. Detected on myeloid cells, peripheral blood monocytes, splenic and bone marrow dendritic cells, and thioglycollate-elicited macrophages and neutrophils but absent from lymphoid populations with no expression observed on T cells, B cells, NK cells or other granulocytes (at protein level). Expressed in peripheral blood leukocytes, spleen, liver, thymus and small intestine. Expressed in splenic dendritic cell subsets (at protein level).

The protein resides in the cell membrane. Functionally, receptor for the invariable Fc fragment of immunoglobulin gamma (IgG). Binds with intermediate affinity to both IgG2a and IgG2b. Can bind to IgG2a and IgG2b monomers. Does not display binding to IgG1 or IgG3. Recognizes neutralizing virus-specific IgGs displayed on the cell surface of infected cells and triggers antibody-dependent cellular cytotoxicity (ADCC). Confers protection to lethal influenza virus infection. On splenic dendritic cells, uptakes antigen immune complexes and efficiently divert them into MHC class I and II antigen presentation pathways to provide for superior priming of CD4-positive and CD8-positive T cell immune responses. Mediates neutrophil activation by IgG complexes redundantly with FCGR2A. Plays a role in promoting bone resorption by enhancing osteoclast differentiation following binding to IgG2a. Also acts as a receptor for the Fc region of immunoglobulin epsilon (IgE). Binds with low affinity to both the a and b allotypes of IgE. Has also been shown to bind to IgE allotype a only but not to allotype b. Binds aggregated IgE but not the monomeric form and bound monomeric IgG is readily displaced by IgE complexes. Binding to IgE promotes macrophage-mediated phagocytosis, antigen presentation to T cells, production of pro-inflammatory cytokines and the late phase of cutaneous allergic reactions. Mediates enhanced ADCC in response to afucosylated IgGs. The protein is Low affinity immunoglobulin gamma Fc region receptor III-A of Mus musculus (Mouse).